Here is a 232-residue protein sequence, read N- to C-terminus: Large ribosomal subunit protein uL1 (232 aa).

It belongs to the universal ribosomal protein uL1 family. As to quaternary structure, part of the 50S ribosomal subunit.

Functionally, binds directly to 23S rRNA. The L1 stalk is quite mobile in the ribosome, and is involved in E site tRNA release. In terms of biological role, protein L1 is also a translational repressor protein, it controls the translation of the L11 operon by binding to its mRNA. In Colwellia psychrerythraea (strain 34H / ATCC BAA-681) (Vibrio psychroerythus), this protein is Large ribosomal subunit protein uL1.